Here is a 256-residue protein sequence, read N- to C-terminus: Non-specific lipid transfer protein GPI-anchored 23 (256 aa).

Positions 1-21 (MKPSFVLLSIVLLLSSSLSDA) are cleaved as a signal peptide. Asparagine 41 is a glycosylation site (N-linked (GlcNAc...) asparagine). Cystine bridges form between cysteine 45-cysteine 88, cysteine 55-cysteine 72, cysteine 73-cysteine 113, and cysteine 86-cysteine 121. The disordered stretch occupies residues 125 to 230 (TPAASTPVSP…SPSPSPSPSI (106 aa)). Positions 138 to 230 (SPTTSPSSAK…SPSPSPSPSI (93 aa)) are enriched in low complexity. The GPI-anchor amidated serine moiety is linked to residue serine 225. The propeptide at 226-256 (PSPSISSSGILLVSKLFIAVVMVSSFLYILA) is removed in mature form.

It belongs to the plant LTP family. In terms of tissue distribution, confined to the anthers of the inflorescence.

It is found in the cell membrane. In terms of biological role, probable lipid transfer protein. The chain is Non-specific lipid transfer protein GPI-anchored 23 from Arabidopsis thaliana (Mouse-ear cress).